Here is a 480-residue protein sequence, read N- to C-terminus: Acetylxylan esterase (480 aa).

The signal sequence occupies residues 1–19 (MNRKLFMTGLLMLAMTMQA).

It belongs to the AB hydrolase superfamily.

The catalysed reaction is Deacetylation of xylans and xylo-oligosaccharides.. It participates in glycan degradation; xylan degradation. Functionally, involved in degradation of plant cell wall polysaccharides. Is an acetyl esterase with broad substrate specificity, releasing acetic acid from acetylated xylo-oligosaccharides and acetylated xylan as well as xylose-tetraacetate, 4-O-methylumbelliferyl acetate, glucose-pentaacetate, and cephalosporin C. Appears to have greater activity on oligosaccharides than on polymeric substrates. Is also able to release acetic acid from xylo-oligosaccharides with 4-O-methylglucuronic acid side groups proximally located to O-acetyl esters. Preferentially targets xylo-oligosaccharides possessing three or more O-acetyl groups, but following their depletion it is active on the less acetylated portion of the substrate. The polypeptide is Acetylxylan esterase (Xylanibacter ruminicola (strain ATCC 19189 / DSM 19721 / CIP 105475 / JCM 8958 / 23) (Prevotella ruminicola)).